The primary structure comprises 731 residues: DNA ligase (731 aa).

Residues 47 to 51, 96 to 97, and E133 contribute to the NAD(+) site; these read DAEYD and SI. K135 serves as the catalytic N6-AMP-lysine intermediate. Residues R156, E192, K313, and K337 each contribute to the NAD(+) site. Zn(2+)-binding residues include C462, C465, C480, and C486. The region spanning 645–731 is the BRCT domain; that stretch reads AATLPLAGMT…RGTPPNAGGA (87 aa).

It belongs to the NAD-dependent DNA ligase family. LigA subfamily. The cofactor is Mg(2+). Requires Mn(2+) as cofactor.

The catalysed reaction is NAD(+) + (deoxyribonucleotide)n-3'-hydroxyl + 5'-phospho-(deoxyribonucleotide)m = (deoxyribonucleotide)n+m + AMP + beta-nicotinamide D-nucleotide.. Functionally, DNA ligase that catalyzes the formation of phosphodiester linkages between 5'-phosphoryl and 3'-hydroxyl groups in double-stranded DNA using NAD as a coenzyme and as the energy source for the reaction. It is essential for DNA replication and repair of damaged DNA. This is DNA ligase from Acidovorax sp. (strain JS42).